The primary structure comprises 1216 residues: ATP-dependent DNA helicase Q4 (1216 aa).

2 disordered regions span residues 72–100 (EAQE…QSLL) and 113–171 (NLKN…PRLG). Polar residues-rich tracts occupy residues 86 to 100 (AATQ…QSLL) and 114 to 137 (LKNT…SLST). Residues serine 179 and serine 181 each carry the phosphoserine modification. Residues 235–340 (SEVSVQSPEA…LHASPRPASL (106 aa)) form a disordered region. 2 stretches are compositionally biased toward polar residues: residues 248 to 262 (QPAQ…SINS) and 306 to 320 (TQVN…SNQA). Residues 393 to 410 (DTCFRCGQFGHWASQCSQ) form a CCHC-type zinc finger. The disordered stretch occupies residues 436–458 (AQRTGTASCHHSGEETQPAAPEL). Residues 506-684 (IMRILSGIST…AQHLGIAGEF (179 aa)) enclose the Helicase ATP-binding domain. 519-526 (LPTGAGKS) provides a ligand contact to ATP. Positions 627–630 (DEVH) match the DEAH box motif. A Helicase C-terminal domain is found at 705–872 (DSDQALVTLL…AVKRLVQRVF (168 aa)). Zn(2+) contacts are provided by cysteine 875, cysteine 877, cysteine 906, and histidine 909.

It belongs to the helicase family. RecQ subfamily. As to quaternary structure, interacts with UBR1 and UBR2. Interacts with MCM10; this interaction regulates RECQL4 unwinding activity. Interacts with TOPBP1. Zn(2+) is required as a cofactor.

It localises to the cytoplasm. The protein localises to the nucleus. The enzyme catalyses Couples ATP hydrolysis with the unwinding of duplex DNA by translocating in the 3'-5' direction.. It catalyses the reaction ATP + H2O = ADP + phosphate + H(+). An ATP-dependent DNA helicase which unwinds dsDNA with a 3'-overhang in a 3'-5' direction. May play a role in development of the palate and the limbs. May modulate chromosome segregation. The protein is ATP-dependent DNA helicase Q4 (Recql4) of Mus musculus (Mouse).